Reading from the N-terminus, the 240-residue chain is Purine nucleoside phosphorylase RP494 (240 aa).

Histidine 60, cysteine 96, and histidine 113 together coordinate Zn(2+).

It belongs to the purine nucleoside phosphorylase YfiH/LACC1 family. As to quaternary structure, homodimer. Cu(2+) is required as a cofactor. It depends on Zn(2+) as a cofactor.

It catalyses the reaction adenosine + phosphate = alpha-D-ribose 1-phosphate + adenine. The catalysed reaction is S-methyl-5'-thioadenosine + phosphate = 5-(methylsulfanyl)-alpha-D-ribose 1-phosphate + adenine. The enzyme catalyses inosine + phosphate = alpha-D-ribose 1-phosphate + hypoxanthine. It carries out the reaction adenosine + H2O + H(+) = inosine + NH4(+). Purine nucleoside enzyme that catalyzes the phosphorolysis of adenosine and inosine nucleosides, yielding D-ribose 1-phosphate and the respective free bases, adenine and hypoxanthine. Also catalyzes the phosphorolysis of S-methyl-5'-thioadenosine into adenine and S-methyl-5-thio-alpha-D-ribose 1-phosphate. Also has adenosine deaminase activity. The sequence is that of Purine nucleoside phosphorylase RP494 from Rickettsia prowazekii (strain Madrid E).